Consider the following 377-residue polypeptide: Presenilin-associated rhomboid-like protein, mitochondrial (377 aa).

The N-terminal 50 residues, 1 to 50 (MALYSWVQRGWRCGQTWAPLLGGGYRELSATQARQLLGRRFNLLLQQKCG), are a transit peptide targeting the mitochondrion. At 51 to 95 (FRKAPRKVEPRRSDTGSSGEAYKRSALIPPLEETVFYPSPYPVRT) the chain is on the mitochondrial matrix side. Residues Ser-63 and Ser-68 each carry the phosphoserine modification. A helical transmembrane segment spans residues 96 to 116 (LLKPFFFTVGFTGCAFGSAAI). At 117 to 165 (WQYESLKSRVQSYFDGIKADWLDSIRPQKEGNLRKEINKWWNSLSDGQR) the chain is on the mitochondrial intermembrane side. A helical membrane pass occupies residues 166–186 (TVTGIIAANALVFCLWRVPSL). Topologically, residues 187–214 (HRTMIRYFTSNPASKVLCSPMLLSTFSH) are mitochondrial matrix. The chain crosses the membrane as a helical span at residues 215 to 235 (FSLFHMAANMYVLWSFSTSIV). Residues 236-242 (NILGQEQ) are Mitochondrial intermembrane-facing. A helical membrane pass occupies residues 243-263 (FVAVYLSAGVISNFVSYVCKV). Topologically, residues 264-268 (ATGRY) are mitochondrial matrix. Residues 269–289 (GPSLGASGAIMTVLAAVCTKI) traverse the membrane as a helical segment. Catalysis depends on Ser-275, which acts as the Nucleophile. At 290 to 293 (PEGR) the chain is on the mitochondrial intermembrane side. A helical transmembrane segment spans residues 294 to 314 (LAIIFLPVFTFTAGNALKAII). Over 315–331 (AMDTAGMILGWKFFDHA) the chain is Mitochondrial matrix. The chain crosses the membrane as a helical span at residues 332-352 (AHLGGALFGIWYITYGHELIW). The active site involves His-333. Residues 353–377 (KNREPLVKIWHEIRTNGPKKGGGSK) are Mitochondrial intermembrane-facing.

Belongs to the peptidase S54 family. In terms of assembly, interacts with PSEN1 and PSEN2. Binds OPA1. Post-translationally, P-beta is proteolytically processed (beta-cleavage) in a PARL-dependent manner.

Its subcellular location is the mitochondrion inner membrane. It localises to the nucleus. It catalyses the reaction Cleaves type-1 transmembrane domains using a catalytic dyad composed of serine and histidine that are contributed by different transmembrane domains.. Functionally, required for the control of apoptosis during postnatal growth. Essential for proteolytic processing of an antiapoptotic form of OPA1 which prevents the release of mitochondrial cytochrome c in response to intrinsic apoptotic signals. Required for the maturation of PINK1 into its 52kDa mature form after its cleavage by mitochondrial-processing peptidase (MPP). Promotes cleavage of serine/threonine-protein phosphatase PGAM5 in damaged mitochondria in response to loss of mitochondrial membrane potential. Mediates differential cleavage of PINK1 and PGAM5 depending on the health status of mitochondria, disassociating from PINK1 and associating with PGAM5 in response to mitochondrial membrane potential loss. Required for processing of CLPB into a form with higher protein disaggregase activity by removing an autoinhibitory N-terminal peptide. Promotes processing of DIABLO/SMAC in the mitochondrion which is required for DIABLO apoptotic activity. Also required for cleavage of STARD7 and TTC19. Promotes changes in mitochondria morphology regulated by phosphorylation of P-beta domain. The protein is Presenilin-associated rhomboid-like protein, mitochondrial of Rattus norvegicus (Rat).